Consider the following 235-residue polypeptide: Large ribosomal subunit protein uL1 (235 aa).

This sequence belongs to the universal ribosomal protein uL1 family. As to quaternary structure, part of the 50S ribosomal subunit.

In terms of biological role, binds directly to 23S rRNA. The L1 stalk is quite mobile in the ribosome, and is involved in E site tRNA release. Protein L1 is also a translational repressor protein, it controls the translation of the L11 operon by binding to its mRNA. This is Large ribosomal subunit protein uL1 from Prochlorococcus marinus (strain MIT 9312).